A 387-amino-acid chain; its full sequence is LL-diaminopimelate aminotransferase (387 aa).

2 residues coordinate substrate: Y14 and G39. Pyridoxal 5'-phosphate is bound by residues Y68, 102 to 103 (SK), Y127, N177, Y208, and 236 to 238 (SLS). The substrate site is built by K103, Y127, and N177. K239 carries the post-translational modification N6-(pyridoxal phosphate)lysine. Residue R247 coordinates pyridoxal 5'-phosphate. R365 serves as a coordination point for substrate.

The protein belongs to the class-I pyridoxal-phosphate-dependent aminotransferase family. LL-diaminopimelate aminotransferase subfamily. Homodimer. It depends on pyridoxal 5'-phosphate as a cofactor.

The enzyme catalyses (2S,6S)-2,6-diaminopimelate + 2-oxoglutarate = (S)-2,3,4,5-tetrahydrodipicolinate + L-glutamate + H2O + H(+). It participates in amino-acid biosynthesis; L-lysine biosynthesis via DAP pathway; LL-2,6-diaminopimelate from (S)-tetrahydrodipicolinate (aminotransferase route): step 1/1. Involved in the synthesis of meso-diaminopimelate (m-DAP or DL-DAP), required for both lysine and peptidoglycan biosynthesis. Catalyzes the direct conversion of tetrahydrodipicolinate to LL-diaminopimelate. The protein is LL-diaminopimelate aminotransferase of Aquifex aeolicus (strain VF5).